The sequence spans 87 residues: Small ribosomal subunit protein uS15 (87 aa).

Belongs to the universal ribosomal protein uS15 family. In terms of assembly, part of the 30S ribosomal subunit. Forms a bridge to the 50S subunit in the 70S ribosome, contacting the 23S rRNA.

In terms of biological role, one of the primary rRNA binding proteins, it binds directly to 16S rRNA where it helps nucleate assembly of the platform of the 30S subunit by binding and bridging several RNA helices of the 16S rRNA. Functionally, forms an intersubunit bridge (bridge B4) with the 23S rRNA of the 50S subunit in the ribosome. The sequence is that of Small ribosomal subunit protein uS15 from Alkaliphilus metalliredigens (strain QYMF).